We begin with the raw amino-acid sequence, 283 residues long: Pantothenate synthetase (283 aa).

30 to 37 (MGALHEGH) contacts ATP. The active-site Proton donor is the His37. Residue Gln61 participates in (R)-pantoate binding. Gln61 lines the beta-alanine pocket. 150-153 (GRKD) provides a ligand contact to ATP. Residue Gln156 participates in (R)-pantoate binding. ATP contacts are provided by residues Val179 and 187–190 (MSSR).

The protein belongs to the pantothenate synthetase family. As to quaternary structure, homodimer.

The protein localises to the cytoplasm. It carries out the reaction (R)-pantoate + beta-alanine + ATP = (R)-pantothenate + AMP + diphosphate + H(+). It participates in cofactor biosynthesis; (R)-pantothenate biosynthesis; (R)-pantothenate from (R)-pantoate and beta-alanine: step 1/1. In terms of biological role, catalyzes the condensation of pantoate with beta-alanine in an ATP-dependent reaction via a pantoyl-adenylate intermediate. The polypeptide is Pantothenate synthetase (Rhodopirellula baltica (strain DSM 10527 / NCIMB 13988 / SH1)).